A 579-amino-acid chain; its full sequence is Probable N-acetylgalactosaminyltransferase 9 (579 aa).

Residues 1–12 (MLRYIIPRKKGT) are Cytoplasmic-facing. The helical; Signal-anchor for type II membrane protein transmembrane segment at 13–30 (FVIAAFLTVAFFCIVAYH) threads the bilayer. The Lumenal segment spans residues 31–579 (RNDRRRTKFQ…KWNFIDPAKA (549 aa)). N67 is a glycosylation site (N-linked (GlcNAc...) asparagine). 5 disulfide bridges follow: C123-C356, C347-C427, C464-C483, C507-C520, and C545-C562. Positions 133-243 (LPKTSVIIIF…HGWLEPIVQR (111 aa)) are catalytic subdomain A. D174 and R204 together coordinate substrate. Residue D227 participates in Mn(2+) binding. A substrate-binding site is contributed by S228. H229 contributes to the Mn(2+) binding site. The catalytic subdomain B stretch occupies residues 302-364 (YIRSPTMAGG…PCSHVGHIFR (63 aa)). W333 is a binding site for substrate. Mn(2+) is bound at residue H361. Residues R364, H367, and Y369 each contribute to the substrate site. N370 carries an N-linked (GlcNAc...) asparagine glycan. A Ricin B-type lectin domain is found at 450 to 574 (AYGALHTVVS…KDEHQKWNFI (125 aa)).

Belongs to the glycosyltransferase 2 family. GalNAc-T subfamily. Mn(2+) is required as a cofactor.

It localises to the golgi apparatus membrane. The protein operates within protein modification; protein glycosylation. Its function is as follows. Probable glycopeptide transferase involved in O-linked oligosaccharide biosynthesis. Glycopeptide transferases catalyze the transfer of an N-acetyl-D-galactosamine residue to an already glycosylated peptide. In contrast to other members of the family, it does not act as a peptide transferase that transfers GalNAc onto serine or threonine residue on peptides that have been tested. Some peptide transferase activity is however not excluded, considering that its appropriate peptide substrate may remain unidentified. In Caenorhabditis elegans, this protein is Probable N-acetylgalactosaminyltransferase 9 (gly-9).